The following is a 117-amino-acid chain: Holo-[acyl-carrier-protein] synthase (117 aa).

Mg(2+) contacts are provided by D8 and E58.

This sequence belongs to the P-Pant transferase superfamily. AcpS family. Mg(2+) serves as cofactor.

The protein resides in the cytoplasm. The enzyme catalyses apo-[ACP] + CoA = holo-[ACP] + adenosine 3',5'-bisphosphate + H(+). Transfers the 4'-phosphopantetheine moiety from coenzyme A to a Ser of acyl-carrier-protein. This Enterococcus faecalis (strain ATCC 700802 / V583) protein is Holo-[acyl-carrier-protein] synthase.